We begin with the raw amino-acid sequence, 947 residues long: Zinc finger CCCH domain-containing protein 18 (947 aa).

M1 carries the post-translational modification N-acetylmethionine. Disordered stretches follow at residues 1 to 218, 275 to 295, and 387 to 921; these read MDVA…PRPT, GGPVVDEILPPPPPEPPTESA, and YTEA…TLSR. 9 positions are modified to phosphoserine: S6, S32, S44, S57, S63, S70, S74, S79, and S91. The span at 73–85 shows a compositional bias: basic and acidic residues; sequence KSQDQDSEAHELS. Positions 94–104 are enriched in acidic residues; it reads EEGDDAEEDGT. The residue at position 104 (T104) is a Phosphothreonine. Phosphoserine is present on residues S105 and S113. The span at 105-119 shows a compositional bias: basic and acidic residues; that stretch reads SDLRDEASSVTRELD. Acidic residues-rich tracts occupy residues 120 to 131 and 138 to 153; these read EHELDYDEEVPE and QEEEAEKAGAEEEEEK. Basic and acidic residues predominate over residues 160-185; it reads EEGKPDVQSVGEKEPTEAAKEKKKED. S168 carries the phosphoserine modification. Positions 186–202 are enriched in acidic residues; that stretch reads DDGEIDDGEIDDDDLEE. Positions 203–212 are enriched in basic and acidic residues; it reads GEVKDPSDRK. A C3H1-type zinc finger spans residues 214-240; that stretch reads RPRPTCRFFMKGNCTWGMNCRFIHPGV. A compositionally biased stretch (basic and acidic residues) spans 391–479; that stretch reads EPYHNYRDRE…DRDKDKEKPK (89 aa). A Phosphoserine modification is found at S482. K505 is covalently cross-linked (Glycyl lysine isopeptide (Lys-Gly) (interchain with G-Cter in SUMO2)). Positions 505–515 are enriched in basic and acidic residues; it reads KRADEWKDPWR. Phosphoserine is present on residues S527, S529, and S531. Residues 540 to 601 show a composition bias toward low complexity; the sequence is SASSASASNS…SRSRSFSSSP (62 aa). Over residues 602 to 611 the composition is skewed to pro residues; the sequence is SPSPTPSPHR. Residues K617 and K656 each participate in a glycyl lysine isopeptide (Lys-Gly) (interchain with G-Cter in SUMO2) cross-link. Positions 656-665 are enriched in basic and acidic residues; it reads KPGDLREARR. 2 stretches are compositionally biased toward low complexity: residues 687–720 and 731–745; these read GSSYSGSSSRSRSLSVSSVSSVSSATSSSSSVHS and ASPVSSASSRSPTPA. Basic and acidic residues predominate over residues 755–769; sequence KKEDGVREEKRKRDP. The segment covering 773–804 has biased composition (low complexity); sequence PPKSSKAPAGGKASQQAAAPQQAAPGQPQQGS. Position 809 is an N6-acetyllysine (K809). K812 is covalently cross-linked (Glycyl lysine isopeptide (Lys-Gly) (interchain with G-Cter in SUMO2)). Basic and acidic residues predominate over residues 819–836; the sequence is AAEKGSRKRYEPSDKDRQ. 5 positions are modified to phosphoserine: S837, S846, S862, S887, and S890. The span at 887–918 shows a compositional bias: low complexity; that stretch reads SPQSKSSSKVTSVPGKATDTATAGTKSGKAST. Residue K902 forms a Glycyl lysine isopeptide (Lys-Gly) (interchain with G-Cter in SUMO2) linkage. Residues 915-944 adopt a coiled-coil conformation; the sequence is KASTLSRREELLKQLKAVEDAIARKRAKIP.

As to quaternary structure, interacts with ZFC3H1 in a RNase-insensitive manner.

The protein localises to the nucleus. This is Zinc finger CCCH domain-containing protein 18 (Zc3h18) from Rattus norvegicus (Rat).